Reading from the N-terminus, the 233-residue chain is Large ribosomal subunit protein uL1 (233 aa).

The protein belongs to the universal ribosomal protein uL1 family. Part of the 50S ribosomal subunit.

Binds directly to 23S rRNA. The L1 stalk is quite mobile in the ribosome, and is involved in E site tRNA release. Its function is as follows. Protein L1 is also a translational repressor protein, it controls the translation of the L11 operon by binding to its mRNA. In Deinococcus geothermalis (strain DSM 11300 / CIP 105573 / AG-3a), this protein is Large ribosomal subunit protein uL1.